The sequence spans 320 residues: Olfactory receptor 2T12 (320 aa).

Residues 1–23 (MEMRNTTPDFILLGLFNHTRAHQ) lie on the Extracellular side of the membrane. An N-linked (GlcNAc...) asparagine glycan is attached at asparagine 17. The helical transmembrane segment at 24–47 (VLFMMLLATVLTSLFSNALMILLI) threads the bilayer. The Cytoplasmic portion of the chain corresponds to 48-55 (HWDHRLHR). The chain crosses the membrane as a helical span at residues 56–77 (PMYFLLSQLSLMDMMLVSTTVP). Topologically, residues 78 to 98 (KMAADYLTGNKAISRAGCGVQ) are extracellular. Cysteines 95 and 187 form a disulfide. Residues 99–118 (IFFLPTLGGGECFLLAAMAY) traverse the membrane as a helical segment. The Cytoplasmic segment spans residues 119–137 (DRYAAVCHPLRYPTLMSWQ). The chain crosses the membrane as a helical span at residues 138–156 (LCLRMTMSSWLLGAADGLL). Residues 157-193 (QAVATLSFPYCGAHEIDHFFCEAPVLVRLACADTSVF) lie on the Extracellular side of the membrane. The chain crosses the membrane as a helical span at residues 194–217 (ENAMYICCVLMLLVPFSLILSSYG). Residues 218-234 (LILAAVLLMRSTEARKK) lie on the Cytoplasmic side of the membrane. A helical membrane pass occupies residues 235–257 (AFATCSSHVAVVGLFYGAGIFTY). The Extracellular portion of the chain corresponds to 258-270 (MRPKSHRSTNHDK). The helical transmembrane segment at 271–290 (VVSAFYTMFTPLLNPLIYSV) threads the bilayer. Residues 291-320 (RNSEVKEALKRWLGTCVNLKHQQNEAHRSR) are Cytoplasmic-facing.

Belongs to the G-protein coupled receptor 1 family.

The protein resides in the cell membrane. Its function is as follows. Odorant receptor. This Homo sapiens (Human) protein is Olfactory receptor 2T12 (OR2T12).